A 361-amino-acid chain; its full sequence is UDP-N-acetylglucosamine--N-acetylmuramyl-(pentapeptide) pyrophosphoryl-undecaprenol N-acetylglucosamine transferase (361 aa).

Residues 11 to 13 (TGG), N124, R162, S193, and Q292 contribute to the UDP-N-acetyl-alpha-D-glucosamine site.

This sequence belongs to the glycosyltransferase 28 family. MurG subfamily.

The protein localises to the cell inner membrane. The enzyme catalyses di-trans,octa-cis-undecaprenyl diphospho-N-acetyl-alpha-D-muramoyl-L-alanyl-D-glutamyl-meso-2,6-diaminopimeloyl-D-alanyl-D-alanine + UDP-N-acetyl-alpha-D-glucosamine = di-trans,octa-cis-undecaprenyl diphospho-[N-acetyl-alpha-D-glucosaminyl-(1-&gt;4)]-N-acetyl-alpha-D-muramoyl-L-alanyl-D-glutamyl-meso-2,6-diaminopimeloyl-D-alanyl-D-alanine + UDP + H(+). It functions in the pathway cell wall biogenesis; peptidoglycan biosynthesis. Functionally, cell wall formation. Catalyzes the transfer of a GlcNAc subunit on undecaprenyl-pyrophosphoryl-MurNAc-pentapeptide (lipid intermediate I) to form undecaprenyl-pyrophosphoryl-MurNAc-(pentapeptide)GlcNAc (lipid intermediate II). The sequence is that of UDP-N-acetylglucosamine--N-acetylmuramyl-(pentapeptide) pyrophosphoryl-undecaprenol N-acetylglucosamine transferase from Elusimicrobium minutum (strain Pei191).